Reading from the N-terminus, the 95-residue chain is Aspartyl/glutamyl-tRNA(Asn/Gln) amidotransferase subunit C (95 aa).

This sequence belongs to the GatC family. As to quaternary structure, heterotrimer of A, B and C subunits.

The enzyme catalyses L-glutamyl-tRNA(Gln) + L-glutamine + ATP + H2O = L-glutaminyl-tRNA(Gln) + L-glutamate + ADP + phosphate + H(+). It catalyses the reaction L-aspartyl-tRNA(Asn) + L-glutamine + ATP + H2O = L-asparaginyl-tRNA(Asn) + L-glutamate + ADP + phosphate + 2 H(+). Its function is as follows. Allows the formation of correctly charged Asn-tRNA(Asn) or Gln-tRNA(Gln) through the transamidation of misacylated Asp-tRNA(Asn) or Glu-tRNA(Gln) in organisms which lack either or both of asparaginyl-tRNA or glutaminyl-tRNA synthetases. The reaction takes place in the presence of glutamine and ATP through an activated phospho-Asp-tRNA(Asn) or phospho-Glu-tRNA(Gln). The protein is Aspartyl/glutamyl-tRNA(Asn/Gln) amidotransferase subunit C of Brucella melitensis biotype 2 (strain ATCC 23457).